Consider the following 115-residue polypeptide: NADH-ubiquinone oxidoreductase chain 3 (115 aa).

3 consecutive transmembrane segments (helical) span residues 3–23 (LMLTLLTNTLLASLLVLIAFW), 55–75 (FFLVAITFLLFDLEIALLLPL), and 84–104 (LNTMLIMALVLISLLAISLAY).

Belongs to the complex I subunit 3 family. As to quaternary structure, core subunit of respiratory chain NADH dehydrogenase (Complex I) which is composed of 45 different subunits. Interacts with TMEM186. Interacts with TMEM242.

It is found in the mitochondrion inner membrane. The enzyme catalyses a ubiquinone + NADH + 5 H(+)(in) = a ubiquinol + NAD(+) + 4 H(+)(out). In terms of biological role, core subunit of the mitochondrial membrane respiratory chain NADH dehydrogenase (Complex I) which catalyzes electron transfer from NADH through the respiratory chain, using ubiquinone as an electron acceptor. Essential for the catalytic activity of complex I. This chain is NADH-ubiquinone oxidoreductase chain 3, found in Equus caballus (Horse).